A 111-amino-acid chain; its full sequence is Prophage-derived-like uncharacterized protein YozM (111 aa).

The signal sequence occupies residues 1–24; that stretch reads MKKRLIGFLVLVPALIMWGITLIE.

The protein is Prophage-derived-like uncharacterized protein YozM (yozM) of Bacillus subtilis (strain 168).